We begin with the raw amino-acid sequence, 253 residues long: Tryptophan synthase alpha chain (253 aa).

Residues Glu-48 and Asp-59 each act as proton acceptor in the active site.

The protein belongs to the TrpA family. In terms of assembly, tetramer of two alpha and two beta chains.

It catalyses the reaction (1S,2R)-1-C-(indol-3-yl)glycerol 3-phosphate + L-serine = D-glyceraldehyde 3-phosphate + L-tryptophan + H2O. Its pathway is amino-acid biosynthesis; L-tryptophan biosynthesis; L-tryptophan from chorismate: step 5/5. Functionally, the alpha subunit is responsible for the aldol cleavage of indoleglycerol phosphate to indole and glyceraldehyde 3-phosphate. The chain is Tryptophan synthase alpha chain from Caldicellulosiruptor saccharolyticus (strain ATCC 43494 / DSM 8903 / Tp8T 6331).